A 168-amino-acid polypeptide reads, in one-letter code: 6,7-dimethyl-8-ribityllumazine synthase (168 aa).

Residues tryptophan 31, 65 to 67 (SFE), and 89 to 91 (CVV) contribute to the 5-amino-6-(D-ribitylamino)uracil site. Residue 94–95 (DT) participates in (2S)-2-hydroxy-3-oxobutyl phosphate binding. The active-site Proton donor is histidine 97. Tyrosine 122 contributes to the 5-amino-6-(D-ribitylamino)uracil binding site. A (2S)-2-hydroxy-3-oxobutyl phosphate-binding site is contributed by arginine 136.

The protein belongs to the DMRL synthase family.

The catalysed reaction is (2S)-2-hydroxy-3-oxobutyl phosphate + 5-amino-6-(D-ribitylamino)uracil = 6,7-dimethyl-8-(1-D-ribityl)lumazine + phosphate + 2 H2O + H(+). Its pathway is cofactor biosynthesis; riboflavin biosynthesis; riboflavin from 2-hydroxy-3-oxobutyl phosphate and 5-amino-6-(D-ribitylamino)uracil: step 1/2. Its function is as follows. Catalyzes the formation of 6,7-dimethyl-8-ribityllumazine by condensation of 5-amino-6-(D-ribitylamino)uracil with 3,4-dihydroxy-2-butanone 4-phosphate. This is the penultimate step in the biosynthesis of riboflavin. In Phocaeicola vulgatus (strain ATCC 8482 / DSM 1447 / JCM 5826 / CCUG 4940 / NBRC 14291 / NCTC 11154) (Bacteroides vulgatus), this protein is 6,7-dimethyl-8-ribityllumazine synthase.